The primary structure comprises 130 residues: Ribonuclease P protein component 2 (130 aa).

This sequence belongs to the eukaryotic/archaeal RNase P protein component 2 family. In terms of assembly, consists of a catalytic RNA component and at least 4-5 protein subunits.

The protein resides in the cytoplasm. It carries out the reaction Endonucleolytic cleavage of RNA, removing 5'-extranucleotides from tRNA precursor.. Part of ribonuclease P, a protein complex that generates mature tRNA molecules by cleaving their 5'-ends. The polypeptide is Ribonuclease P protein component 2 (Methanococcus maripaludis (strain C6 / ATCC BAA-1332)).